Reading from the N-terminus, the 366-residue chain is Chorismate synthase (366 aa).

An NADP(+)-binding site is contributed by Arg48. FMN is bound by residues Arg125–Ser127, Asn241–Ala242, Gly285, Lys300–Ser304, and Arg326.

Belongs to the chorismate synthase family. As to quaternary structure, homotetramer. FMNH2 is required as a cofactor.

The catalysed reaction is 5-O-(1-carboxyvinyl)-3-phosphoshikimate = chorismate + phosphate. The protein operates within metabolic intermediate biosynthesis; chorismate biosynthesis; chorismate from D-erythrose 4-phosphate and phosphoenolpyruvate: step 7/7. Catalyzes the anti-1,4-elimination of the C-3 phosphate and the C-6 proR hydrogen from 5-enolpyruvylshikimate-3-phosphate (EPSP) to yield chorismate, which is the branch point compound that serves as the starting substrate for the three terminal pathways of aromatic amino acid biosynthesis. This reaction introduces a second double bond into the aromatic ring system. In Paracoccus denitrificans (strain Pd 1222), this protein is Chorismate synthase.